Consider the following 626-residue polypeptide: Phosphomethylpyrimidine synthase (626 aa).

Residues 92 to 106 (AREVKPEDNGLKGPD) show a composition bias toward basic and acidic residues. The segment at 92-117 (AREVKPEDNGLKGPDRSAGVPPFPNV) is disordered. Substrate contacts are provided by residues Asn219, Met248, Tyr277, His313, 333-335 (SRG), 374-377 (DGLR), and Glu413. His417 lines the Zn(2+) pocket. Residue Tyr440 coordinates substrate. His481 serves as a coordination point for Zn(2+). Cys561, Cys564, and Cys569 together coordinate [4Fe-4S] cluster.

Belongs to the ThiC family. As to quaternary structure, homodimer. The cofactor is [4Fe-4S] cluster.

It carries out the reaction 5-amino-1-(5-phospho-beta-D-ribosyl)imidazole + S-adenosyl-L-methionine = 4-amino-2-methyl-5-(phosphooxymethyl)pyrimidine + CO + 5'-deoxyadenosine + formate + L-methionine + 3 H(+). Its pathway is cofactor biosynthesis; thiamine diphosphate biosynthesis. Functionally, catalyzes the synthesis of the hydroxymethylpyrimidine phosphate (HMP-P) moiety of thiamine from aminoimidazole ribotide (AIR) in a radical S-adenosyl-L-methionine (SAM)-dependent reaction. In Novosphingobium aromaticivorans (strain ATCC 700278 / DSM 12444 / CCUG 56034 / CIP 105152 / NBRC 16084 / F199), this protein is Phosphomethylpyrimidine synthase.